A 214-amino-acid polypeptide reads, in one-letter code: NADH-quinone oxidoreductase subunit C (214 aa).

Belongs to the complex I 30 kDa subunit family. In terms of assembly, NDH-1 is composed of 14 different subunits. Subunits NuoB, C, D, E, F, and G constitute the peripheral sector of the complex.

It localises to the cell inner membrane. The catalysed reaction is a quinone + NADH + 5 H(+)(in) = a quinol + NAD(+) + 4 H(+)(out). Functionally, NDH-1 shuttles electrons from NADH, via FMN and iron-sulfur (Fe-S) centers, to quinones in the respiratory chain. The immediate electron acceptor for the enzyme in this species is believed to be ubiquinone. Couples the redox reaction to proton translocation (for every two electrons transferred, four hydrogen ions are translocated across the cytoplasmic membrane), and thus conserves the redox energy in a proton gradient. This Francisella tularensis subsp. holarctica (strain LVS) protein is NADH-quinone oxidoreductase subunit C.